Here is a 31-residue protein sequence, read N- to C-terminus: Photosystem II reaction center protein T (31 aa).

A helical transmembrane segment spans residues 3-23 (ALVYTFLLIGTLGVIFFAIFF).

This sequence belongs to the PsbT family. In terms of assembly, PSII is composed of 1 copy each of membrane proteins PsbA, PsbB, PsbC, PsbD, PsbE, PsbF, PsbH, PsbI, PsbJ, PsbK, PsbL, PsbM, PsbT, PsbY, PsbZ, Psb30/Ycf12, at least 3 peripheral proteins of the oxygen-evolving complex and a large number of cofactors. It forms dimeric complexes.

It localises to the plastid. Its subcellular location is the chloroplast thylakoid membrane. Functionally, found at the monomer-monomer interface of the photosystem II (PS II) dimer, plays a role in assembly and dimerization of PSII. PSII is a light-driven water plastoquinone oxidoreductase, using light energy to abstract electrons from H(2)O, generating a proton gradient subsequently used for ATP formation. This chain is Photosystem II reaction center protein T, found in Euglena gracilis.